The following is a 178-amino-acid chain: uncharacterized protein (178 aa).

The N-terminal stretch at 1-20 (MKKLLVASLALLILTPVALA) is a signal peptide.

This is an uncharacterized protein from Archaeoglobus fulgidus (strain ATCC 49558 / DSM 4304 / JCM 9628 / NBRC 100126 / VC-16).